The chain runs to 291 residues: MACLSPSQLQKFQQDGFLVLEGFLSAEECVAMQQRIGEIVAEMDVPLHCRTEFSTQEEEQLRAQGSTDYFLSSGDKIRFFFEKGVFDEKGNFLVPPEKSINKIGHALHAHDPVFKSITHSFKVQTLARSLGLQMPVVVQSMYIFKQPHFGGEVSPHQDASFLYTEPLGRVLGVWIAVEDATLENGCLWFIPGSHTSGVSRRMVRAPVGSAPGTSFLGSEPARDNSLFVPTPVQRGALVLIHGEVVHKSKQNLSDRSRQAYTFHLMEASGTTWSPENWLQPTAELPFPQLYT.

At Thr55 the chain carries Phosphothreonine. 2-oxoglutarate is bound by residues Lys102, Met141, 156–158 (HQD), and Trp174. Residues His156 and Asp158 each coordinate Fe cation. A Fe cation-binding site is contributed by His246. 2-oxoglutarate is bound by residues Ser248 and Arg257.

It belongs to the PhyH family. PHYHD1 subfamily. Requires Fe cation as cofactor.

Its activity is regulated as follows. Activity is increased by ascorbate. Inhibited by myristoyl-CoA. Its function is as follows. 2-oxoglutarate(2OG)-dependent dioxygenase that catalyzes the conversion of 2-oxoglutarate to succinate and CO(2) in an iron-dependent manner. However, does not couple 2OG turnover to the hydroxylation of acyl-coenzyme A derivatives, implying that it is not directly involved in phytanoyl coenzyme-A metabolism. Does not show detectable activity towards fatty acid CoA thioesters. Functionally, isoform 2 probably lacks enzyme activity. In terms of biological role, isoform 3 probably lacks enzyme activity. The sequence is that of Phytanoyl-CoA dioxygenase domain-containing protein 1 from Homo sapiens (Human).